We begin with the raw amino-acid sequence, 1765 residues long: Sodium channel protein type 11 subunit alpha (1765 aa).

Over 1–126 the chain is Cytoplasmic; sequence MEERYYPVIF…PIRSFMIRIS (126 aa). The I repeat unit spans residues 115-406; sequence FNPIRSFMIR…VTMAYEEQNR (292 aa). A helical membrane pass occupies residues 127-148; the sequence is VHSVFSMFIICTVIINCMFMAN. An N-linked (GlcNAc...) asparagine glycan is attached at asparagine 149. Topologically, residues 149–159 are extracellular; the sequence is NSSVDSRPSSN. A helical membrane pass occupies residues 160–179; it reads IPEYVFIGIYVLEAVIKILA. Residues 180 to 191 lie on the Cytoplasmic side of the membrane; sequence RGFIVDEFSYLR. Residues 192 to 211 form a helical membrane-spanning segment; sequence DPWNWLDFIVIGTAIAPCFL. Residues 212–219 lie on the Extracellular side of the membrane; that stretch reads GNKVNNLS. N-linked (GlcNAc...) asparagine glycosylation is present at asparagine 217. A helical; Voltage-sensor transmembrane segment spans residues 220–239; it reads TLRTFRVLRALKAISVISGL. Topologically, residues 240–255 are cytoplasmic; the sequence is KVIVGALLRSVKKLVD. The helical transmembrane segment at 256–269 threads the bilayer; that stretch reads VMVLTLFCLSIFAL. Over 270–342 the chain is Extracellular; it reads VGQQLFMGIL…PDYNYTNFDS (73 aa). Cysteine 283 and cysteine 320 are oxidised to a cystine. Asparagine 303, asparagine 327, and asparagine 336 each carry an N-linked (GlcNAc...) asparagine glycan. Residues 343–367 constitute an intramembrane region (pore-forming); the sequence is FGWSFLAMFRVMTQDSWEKLYRQIL. Residues 368 to 374 are Extracellular-facing; the sequence is RTSGIYF. Residues 375 to 400 traverse the membrane as a helical segment; sequence VFFFVVVIFLGSFYLLNLTLAVVTMA. Residues 401 to 570 are Cytoplasmic-facing; the sequence is YEEQNRNVAA…WLCIKKVLQT (170 aa). Residues 470–490 form a disordered region; the sequence is RGSKTARASASDSEDDASKNP. The II repeat unit spans residues 557 to 821; it reads CSPPWLCIKK…EGETRKTKVQ (265 aa). The helical transmembrane segment at 571 to 594 threads the bilayer; it reads IMTDPFTELAITICIIVNTVFLAM. The Extracellular segment spans residues 595 to 605; that stretch reads EHHNMDNSLKD. The helical transmembrane segment at 606 to 629 threads the bilayer; that stretch reads ILKIGNWVFTGIFIAEMCLKIIAL. Residues 630-637 are Cytoplasmic-facing; that stretch reads DPYHYFRH. A helical membrane pass occupies residues 638–659; sequence GWNIFDSIVALVSLADVLFHKL. Over 660–664 the chain is Extracellular; that stretch reads SKNLS. N-linked (GlcNAc...) asparagine glycosylation occurs at asparagine 662. A helical; Voltage-sensor membrane pass occupies residues 665 to 684; it reads FLASLRVLRVFKLAKSWPTL. At 685 to 699 the chain is on the cytoplasmic side; the sequence is NTLIKIIGHSVGALG. A helical transmembrane segment spans residues 700 to 722; that stretch reads NLTVVLTIVVFIFSVVGMRLFGA. Residues 723 to 742 lie on the Extracellular side of the membrane; the sequence is KFNKTCSTSPESLRRWHMGD. Asparagine 725 carries N-linked (GlcNAc...) asparagine glycosylation. Positions 743 to 763 form an intramembrane region, pore-forming; it reads FYHSFLVVFRILCGEWIENMW. The Extracellular segment spans residues 764–773; that stretch reads ECMQEMEGSP. Cysteine 765 and cysteine 775 are disulfide-bonded. Residues 774–799 form a helical membrane-spanning segment; it reads LCVIVFVLIMVVGKLVVLNLFIALLL. Over 800 to 1030 the chain is Cytoplasmic; the sequence is NSFSNEEKDG…WWNLRKTCYQ (231 aa). Residues 850–869 form a disordered region; that stretch reads NSPKPNEATESFAGESRDTA. An III repeat occupies 1023 to 1320; that stretch reads NLRKTCYQIV…KKYYNAMKKL (298 aa). A helical membrane pass occupies residues 1031–1053; it reads IVKHSWFESFIIFVILLSSGALI. The Extracellular segment spans residues 1054–1067; it reads FEDVNLPSRPQVEK. The helical transmembrane segment at 1068-1093 threads the bilayer; it reads LLKCTDNIFTFIFLLEMILKWVAFGF. Residues 1094–1099 lie on the Cytoplasmic side of the membrane; sequence RKYFTS. Residues 1100–1117 traverse the membrane as a helical segment; it reads AWCWLDFLIVVVSGLSLT. Position 1118 (asparagine 1118) is a topological domain, extracellular. The chain crosses the membrane as a helical; Voltage-sensor span at residues 1119–1140; it reads LPNLKSFRNLRALRPLRALSQF. The Cytoplasmic segment spans residues 1141 to 1159; it reads EGMKVVVNALMSAIPAILN. The helical transmembrane segment at 1160–1181 threads the bilayer; the sequence is VLLVCLIFWLIFCILGVNFFSG. Residues 1182 to 1224 lie on the Extracellular side of the membrane; that stretch reads KFGRCINGTDINKYFNASNVPNQSQCLVSNYTWKVPNVNFDNV. N-linked (GlcNAc...) asparagine glycans are attached at residues asparagine 1188, asparagine 1197, asparagine 1203, and asparagine 1211. An intramembrane region (pore-forming) is located at residues 1225-1246; it reads GNAYLALLQVATYKGWLDIMNA. Residues 1247–1262 lie on the Extracellular side of the membrane; the sequence is AVDSRGKDEQPAFEAN. A helical transmembrane segment spans residues 1263–1289; sequence LYAYLYFVVFIIFGSFFTLNLFIGVII. Residues 1290–1342 are Cytoplasmic-facing; sequence DNFNQQQKKLGGQDIFMTEEQKKYYNAMKKLGTKKPQKPIPRPLNKCQAFVFD. One copy of the IV repeat lies at 1329–1619; sequence IPRPLNKCQA…WEKFDPEATQ (291 aa). Residues 1343-1366 traverse the membrane as a helical segment; that stretch reads LVTSQVFDVIILGLIVTNMIIMMA. Residues 1367–1377 lie on the Extracellular side of the membrane; the sequence is ESEGQPNEVKK. The chain crosses the membrane as a helical span at residues 1378-1401; the sequence is IFDILNIVFVVIFTVECLIKVFAL. Over 1402-1407 the chain is Cytoplasmic; that stretch reads RQHYFT. The chain crosses the membrane as a helical span at residues 1408–1431; the sequence is NGWNLFDCVVVVLSIISTLVSGLE. At 1432-1440 the chain is on the extracellular side; the sequence is NSNVFPPTL. The chain crosses the membrane as a helical; Voltage-sensor span at residues 1441-1463; the sequence is FRIVRLARIGRILRLVRAARGIR. The Cytoplasmic segment spans residues 1464-1478; sequence TLLFALMMSLPSLFN. The helical transmembrane segment at 1479–1501 threads the bilayer; the sequence is IGLLLFLVMFIYAIFGMNWFSKV. The Extracellular portion of the chain corresponds to 1502 to 1515; sequence KRGSGIDDIFNFDT. An intramembrane region (pore-forming) is located at residues 1516-1538; that stretch reads FSGSMLCLFQITTSAGWDALLNP. The Extracellular segment spans residues 1539-1559; sequence MLESKASCNSSSQESCQQPQI. The chain crosses the membrane as a helical span at residues 1560-1584; sequence AIVYFVSYIIISFLIVVNMYIAVIL. Over 1585–1765 the chain is Cytoplasmic; the sequence is ENFNTATEES…DVPKIKVHCD (181 aa).

This sequence belongs to the sodium channel (TC 1.A.1.10) family. Nav1.9/SCN11A subfamily. The voltage-resistant sodium channel consists of an ion conducting pore forming alpha-subunit regulated by one or more auxiliary subunits SCN1B, SCN2B and SCN3B. As to expression, expressed in the dorsal root ganglia (C-fiber neurons), spinal cord, trigeminal ganglia, testis, ovary, uterus and small intestine.

The protein resides in the cell membrane. The catalysed reaction is Na(+)(in) = Na(+)(out). Sodium channel mediating the voltage-dependent sodium ion permeability of excitable membranes. Assuming opened or closed conformations in response to the voltage difference across the membrane, the protein forms a sodium-selective channel through which sodium ions may pass in accordance with their electrochemical gradient. Involved in membrane depolarization during action potential in nociceptors which function as key relay stations for the electrical transmission of pain signals from the periphery to the central nervous system. Also involved in rapid BDNF-evoked neuronal depolarization. In Mus musculus (Mouse), this protein is Sodium channel protein type 11 subunit alpha.